A 271-amino-acid polypeptide reads, in one-letter code: Phosphate import ATP-binding protein PstB (271 aa).

Residues 25–266 (FDTKNLNLWY…PSDKRTEDYI (242 aa)) enclose the ABC transporter domain. 57-64 (GPSGCGKS) contributes to the ATP binding site.

The protein belongs to the ABC transporter superfamily. Phosphate importer (TC 3.A.1.7) family. The complex is composed of two ATP-binding proteins (PstB), two transmembrane proteins (PstC and PstA) and a solute-binding protein (PstS).

Its subcellular location is the cell membrane. It catalyses the reaction phosphate(out) + ATP + H2O = ADP + 2 phosphate(in) + H(+). In terms of biological role, part of the ABC transporter complex PstSACB involved in phosphate import. Responsible for energy coupling to the transport system. The chain is Phosphate import ATP-binding protein PstB from Bacillus anthracis.